An 859-amino-acid polypeptide reads, in one-letter code: Valine--tRNA ligase (859 aa).

A 'HIGH' region motif is present at residues 46–56 (PTVSGQLHIGH). The 'KMSKS' region signature appears at 583–587 (KMSKS). Lys586 lines the ATP pocket.

This sequence belongs to the class-I aminoacyl-tRNA synthetase family. ValS type 2 subfamily. Monomer.

Its subcellular location is the cytoplasm. The enzyme catalyses tRNA(Val) + L-valine + ATP = L-valyl-tRNA(Val) + AMP + diphosphate. Functionally, catalyzes the attachment of valine to tRNA(Val). As ValRS can inadvertently accommodate and process structurally similar amino acids such as threonine, to avoid such errors, it has a 'posttransfer' editing activity that hydrolyzes mischarged Thr-tRNA(Val) in a tRNA-dependent manner. This Rickettsia felis (strain ATCC VR-1525 / URRWXCal2) (Rickettsia azadi) protein is Valine--tRNA ligase.